The primary structure comprises 302 residues: Sulfate adenylyltransferase subunit 2 (302 aa).

Belongs to the PAPS reductase family. CysD subfamily. Heterodimer composed of CysD, the smaller subunit, and CysN.

The catalysed reaction is sulfate + ATP + H(+) = adenosine 5'-phosphosulfate + diphosphate. The protein operates within sulfur metabolism; hydrogen sulfide biosynthesis; sulfite from sulfate: step 1/3. Its function is as follows. With CysN forms the ATP sulfurylase (ATPS) that catalyzes the adenylation of sulfate producing adenosine 5'-phosphosulfate (APS) and diphosphate, the first enzymatic step in sulfur assimilation pathway. APS synthesis involves the formation of a high-energy phosphoric-sulfuric acid anhydride bond driven by GTP hydrolysis by CysN coupled to ATP hydrolysis by CysD. The chain is Sulfate adenylyltransferase subunit 2 from Escherichia coli O7:K1 (strain IAI39 / ExPEC).